The chain runs to 484 residues: UDP-N-acetylmuramoyl-L-alanyl-D-glutamate--2,6-diaminopimelate ligase (484 aa).

Ser-30 is a binding site for UDP-N-acetyl-alpha-D-muramoyl-L-alanyl-D-glutamate. Residue Gly-111–Thr-117 participates in ATP binding. UDP-N-acetyl-alpha-D-muramoyl-L-alanyl-D-glutamate-binding positions include Thr-153–Thr-154, Ser-180, Gln-186, and Arg-188. Residue Lys-220 is modified to N6-carboxylysine. Residues Arg-378, Asp-402–Arg-405, Gly-455, and Glu-459 contribute to the meso-2,6-diaminopimelate site. Positions Asp-402–Arg-405 match the Meso-diaminopimelate recognition motif motif.

The protein belongs to the MurCDEF family. MurE subfamily. Mg(2+) is required as a cofactor. Carboxylation is probably crucial for Mg(2+) binding and, consequently, for the gamma-phosphate positioning of ATP.

The protein localises to the cytoplasm. The enzyme catalyses UDP-N-acetyl-alpha-D-muramoyl-L-alanyl-D-glutamate + meso-2,6-diaminopimelate + ATP = UDP-N-acetyl-alpha-D-muramoyl-L-alanyl-gamma-D-glutamyl-meso-2,6-diaminopimelate + ADP + phosphate + H(+). It participates in cell wall biogenesis; peptidoglycan biosynthesis. Catalyzes the addition of meso-diaminopimelic acid to the nucleotide precursor UDP-N-acetylmuramoyl-L-alanyl-D-glutamate (UMAG) in the biosynthesis of bacterial cell-wall peptidoglycan. The sequence is that of UDP-N-acetylmuramoyl-L-alanyl-D-glutamate--2,6-diaminopimelate ligase from Phocaeicola vulgatus (strain ATCC 8482 / DSM 1447 / JCM 5826 / CCUG 4940 / NBRC 14291 / NCTC 11154) (Bacteroides vulgatus).